The primary structure comprises 130 residues: Histone H2B.1 (130 aa).

Positions 1 to 19 are enriched in basic and acidic residues; that stretch reads MAPKAEKKPASKAPAEKKP. The disordered stretch occupies residues 1 to 39; the sequence is MAPKAEKKPASKAPAEKKPAAKKTASATGTKKRSKTRKE. Lys7 and Lys8 each carry N6-acetyllysine; alternate. Glycyl lysine isopeptide (Lys-Gly) (interchain with G-Cter in SUMO); alternate cross-links involve residues Lys7 and Lys8. Ser11 bears the Phosphoserine mark. The residue at position 12 (Lys12) is an N6-acetyllysine. Lys17 is modified (N6-acetyllysine; alternate). Lys17 participates in a covalent cross-link: Glycyl lysine isopeptide (Lys-Gly) (interchain with G-Cter in SUMO); alternate. Lys18 participates in a covalent cross-link: Glycyl lysine isopeptide (Lys-Gly) (interchain with G-Cter in SUMO). Lys124 is covalently cross-linked (Glycyl lysine isopeptide (Lys-Gly) (interchain with G-Cter in ubiquitin)).

It belongs to the histone H2B family. The nucleosome is a histone octamer containing two molecules each of H2A, H2B, H3 and H4 assembled in one H3-H4 heterotetramer and two H2A-H2B heterodimers. The octamer wraps approximately 147 bp of DNA. Post-translationally, monoubiquitinated by the UBC2-BRE1 complex to form H2BK123ub1. H2BK123ub1 gives a specific tag for epigenetic transcriptional activation and is also prerequisite for H3K4me and H3K79me formation. H2BK123ub1 also modulates the formation of double-strand breaks during meiosis and is a prerequisite for DNA-damage checkpoint activation. Phosphorylated by STE20 to form H2BS10ph during progression through meiotic prophase. May be correlated with chromosome condensation. In terms of processing, acetylated by GCN5 to form H2BK11ac and H2BK16ac. H2BK16ac can also be formed by ESA1. Acetylation of N-terminal lysines and particularly formation of H2BK11acK16ac has a positive effect on transcription. Post-translationally, sumoylation to form H2BK6su or H2BK7su, and probably also H2BK16su or H2BK17su, occurs preferentially near the telomeres and represses gene transcription.

The protein localises to the nucleus. The protein resides in the chromosome. Functionally, core component of nucleosome. Nucleosomes wrap and compact DNA into chromatin, limiting DNA accessibility to the cellular machineries which require DNA as a template. Histones thereby play a central role in transcription regulation, DNA repair, DNA replication and chromosomal stability. DNA accessibility is regulated via a complex set of post-translational modifications of histones, also called histone code, and nucleosome remodeling. This chain is Histone H2B.1 (HTB1), found in Debaryomyces hansenii (strain ATCC 36239 / CBS 767 / BCRC 21394 / JCM 1990 / NBRC 0083 / IGC 2968) (Yeast).